Here is a 337-residue protein sequence, read N- to C-terminus: Inositol 2-dehydrogenase (337 aa).

Belongs to the Gfo/Idh/MocA family. Homotetramer.

It carries out the reaction myo-inositol + NAD(+) = scyllo-inosose + NADH + H(+). Involved in the oxidation of myo-inositol (MI) to 2-keto-myo-inositol (2KMI or 2-inosose). The polypeptide is Inositol 2-dehydrogenase (Corynebacterium glutamicum (strain R)).